A 161-amino-acid polypeptide reads, in one-letter code: Large ribosomal subunit protein uL10 (161 aa).

This sequence belongs to the universal ribosomal protein uL10 family. Part of the ribosomal stalk of the 50S ribosomal subunit. The N-terminus interacts with L11 and the large rRNA to form the base of the stalk. The C-terminus forms an elongated spine to which L12 dimers bind in a sequential fashion forming a multimeric L10(L12)X complex.

Its function is as follows. Forms part of the ribosomal stalk, playing a central role in the interaction of the ribosome with GTP-bound translation factors. This is Large ribosomal subunit protein uL10 (rplJ) from Mycoplasma pneumoniae (strain ATCC 29342 / M129 / Subtype 1) (Mycoplasmoides pneumoniae).